The sequence spans 1490 residues: WD repeat-containing protein 7 (1490 aa).

WD repeat units follow at residues 17–56, 62–104, 156–199, 324–366, 404–443, 462–507, and 558–597; these read APTHCISAVLLTDDGATIVTGCHDGQICLWDLSVELQINP, GHTA…CIEF, ISPD…SDMQ, LICP…DKQG, NEPLKVTASVYIPAHGRLVCGREDGSIVIVPATQTAIVQL, GHRN…MKHI, and RHLFPIQVIKWRPSDDYLVVGCSDGSVYVWQMDTGALDRC. Disordered regions lie at residues 761-783 and 911-945; these read DEEEDEEIMRQRREESDPEYRSS and GDHMKKGPTRPPRPSTPDLSKARGSPPTSSNIVQG. A compositionally biased stretch (basic and acidic residues) spans 768–782; it reads IMRQRREESDPEYRS. Ser935 carries the phosphoserine modification. The span at 936-945 shows a compositional bias: polar residues; that stretch reads PPTSSNIVQG. WD repeat units lie at residues 1351–1390 and 1392–1432; these read PAICRFYMVSYYERNHRIAVGARHGSVALYDIRTGKCQTI and GHKG…LGSI. Ser1456 bears the Phosphoserine mark.

In Homo sapiens (Human), this protein is WD repeat-containing protein 7 (WDR7).